The chain runs to 592 residues: Inactive heparanase-2 (592 aa).

The N-terminal stretch at 1–38 (MRVLCAFPEAMASSSSRPPSCLALVALFLALLLHLSLS) is a signal peptide. N-linked (GlcNAc...) asparagine glycosylation is found at N254 and N392.

The protein belongs to the glycosyl hydrolase 79 family. In terms of assembly, interacts with HPSE. Interacts with SDC1 (via glycan chains).

The protein localises to the secreted. It localises to the extracellular space. Its subcellular location is the extracellular matrix. Functionally, binds heparin and heparan sulfate with high affinity, but lacks heparanase activity. Inhibits HPSE, possibly by competing for its substrates (in vitro). This Mus musculus (Mouse) protein is Inactive heparanase-2 (Hpse2).